We begin with the raw amino-acid sequence, 833 residues long: Interleukin enhancer-binding factor 3 homolog (833 aa).

Positions 11–379 (RIFVNDDRHV…PMKRPIEEES (369 aa)) constitute a DZF domain. 2 disordered regions span residues 65–86 (VNAL…GEQA) and 339–403 (DPLP…KAEP). The residue at position 70 (T70) is a Phosphothreonine. The span at 373–385 (RPIEEESTDEKNP) shows a compositional bias: basic and acidic residues. 2 consecutive DRBM domains span residues 402-471 (EPAQ…DMGL) and 527-593 (HGKN…KLFP). 3 disordered regions span residues 597–651 (NSEV…FNQG), 702–762 (QSDS…GGGA), and 775–833 (AYPS…YQYR). Basic residues predominate over residues 629 to 639 (GRGRGRGRGRG). Residues 640-651 (RGFNNGGGFNQG) show a composition bias toward gly residues. Residues 775 to 818 (AYPSQVTGGQEYNYEGYSNQSNYNSQGGANQNFGGNSAPYNSGQ) are compositionally biased toward polar residues.

The protein localises to the nucleus. Its subcellular location is the nucleolus. The protein resides in the cytoplasm. RNA-binding protein that plays an essential role in the biogenesis of circular RNAs (circRNAs) which are produced by back-splicing circularization of pre-mRNAs. Within the nucleus, promotes circRNAs processing by stabilizing the regulatory elements residing in the flanking introns of the circularized exons. Plays thereby a role in the back-splicing of a subset of circRNAs. As a consequence, participates in a wide range of transcriptional and post-transcriptional processes. Binds to poly-U elements and AU-rich elements (AREs) in the 3'-UTR of target mRNAs. Upon viral infection, ILF3 accumulates in the cytoplasm and participates in the innate antiviral response. Mechanistically, ILF3 becomes phosphorylated and activated by the double-stranded RNA-activated protein kinase/PKR which releases ILF3 from cellular mature circRNAs. In turn, unbound ILF3 molecules are able to interact with and thus inhibit viral mRNAs. This is Interleukin enhancer-binding factor 3 homolog (ilf3) from Danio rerio (Zebrafish).